We begin with the raw amino-acid sequence, 87 residues long: Small ribosomal subunit protein bS20 (87 aa).

The protein belongs to the bacterial ribosomal protein bS20 family.

In terms of biological role, binds directly to 16S ribosomal RNA. This Sphingopyxis alaskensis (strain DSM 13593 / LMG 18877 / RB2256) (Sphingomonas alaskensis) protein is Small ribosomal subunit protein bS20.